The following is a 247-amino-acid chain: Carboxy-S-adenosyl-L-methionine synthase (247 aa).

Residues Tyr39, 64–66 (GCS), 89–90 (DN), 117–118 (DI), Asn132, and Arg199 each bind S-adenosyl-L-methionine.

Belongs to the class I-like SAM-binding methyltransferase superfamily. Cx-SAM synthase family. As to quaternary structure, homodimer.

It catalyses the reaction prephenate + S-adenosyl-L-methionine = carboxy-S-adenosyl-L-methionine + 3-phenylpyruvate + H2O. In terms of biological role, catalyzes the conversion of S-adenosyl-L-methionine (SAM) to carboxy-S-adenosyl-L-methionine (Cx-SAM). This Escherichia coli (strain K12 / MC4100 / BW2952) protein is Carboxy-S-adenosyl-L-methionine synthase.